Consider the following 468-residue polypeptide: Bone morphogenetic protein 3 (468 aa).

An N-terminal signal peptide occupies residues methionine 1–glycine 22. Residues glutamine 23–lysine 358 constitute a propeptide that is removed on maturation. The segment at leucine 29–histidine 53 is disordered. N-linked (GlcNAc...) asparagine glycosylation is found at asparagine 115, asparagine 139, asparagine 171, and asparagine 216. Positions arginine 314 to glutamate 349 are disordered. Over residues arginine 329–histidine 339 the composition is skewed to basic residues. Residues glutamine 340–glutamate 349 show a composition bias toward polar residues. 3 cysteine pairs are disulfide-bonded: cysteine 366–cysteine 433, cysteine 395–cysteine 465, and cysteine 399–cysteine 467. N-linked (GlcNAc...) asparagine glycosylation occurs at asparagine 459.

It belongs to the TGF-beta family. In terms of assembly, homodimer; disulfide-linked.

The protein localises to the secreted. In terms of biological role, negatively regulates bone density. Antagonizes the ability of certain osteogenic BMPs to induce osteoprogenitor differentiation and ossification. The protein is Bone morphogenetic protein 3 (Bmp3) of Mus musculus (Mouse).